The sequence spans 562 residues: Serine/threonine-protein kinase dst3 (562 aa).

Residues 23–285 (FQIVEVVGSG…AQQLLSHPFI (263 aa)) form the Protein kinase domain. ATP contacts are provided by residues 29–37 (VGSGSFGTV) and Lys59. Asp154 functions as the Proton acceptor in the catalytic mechanism. 2 disordered regions span residues 316–339 (LEEQEQQRNSSGSKMVSSVPTRAS) and 366–562 (SIMR…NVNI). Over residues 322–339 (QRNSSGSKMVSSVPTRAS) the composition is skewed to polar residues. Composition is skewed to low complexity over residues 421-431 (NNNNNNNNTTT), 442-454 (QQQQQQQQQNNNK), and 476-494 (TTPTTPTTTQPNTSTTTKT). Residues 495-522 (GSSLNIKPTNNVNRSTISIGQQKSPLQS) are compositionally biased toward polar residues. Acidic residues predominate over residues 542–562 (EDEEDEEEFNHEDYEEINVNI).

It belongs to the protein kinase superfamily. STE Ser/Thr protein kinase family. STE20 subfamily. Mg(2+) is required as a cofactor.

The enzyme catalyses L-seryl-[protein] + ATP = O-phospho-L-seryl-[protein] + ADP + H(+). The catalysed reaction is L-threonyl-[protein] + ATP = O-phospho-L-threonyl-[protein] + ADP + H(+). The sequence is that of Serine/threonine-protein kinase dst3 from Dictyostelium discoideum (Social amoeba).